The primary structure comprises 119 residues: Large ribosomal subunit protein bL20 (119 aa).

It belongs to the bacterial ribosomal protein bL20 family.

Functionally, binds directly to 23S ribosomal RNA and is necessary for the in vitro assembly process of the 50S ribosomal subunit. It is not involved in the protein synthesizing functions of that subunit. The protein is Large ribosomal subunit protein bL20 of Clostridium botulinum (strain ATCC 19397 / Type A).